A 294-amino-acid polypeptide reads, in one-letter code: NAD kinase (294 aa).

The Proton acceptor role is filled by aspartate 74. Residues 74–75 (DG), 148–149 (NE), histidine 159, arginine 176, aspartate 178, 189–194 (TAYSLS), and glutamine 249 contribute to the NAD(+) site.

The protein belongs to the NAD kinase family. A divalent metal cation is required as a cofactor.

It localises to the cytoplasm. The enzyme catalyses NAD(+) + ATP = ADP + NADP(+) + H(+). Its function is as follows. Involved in the regulation of the intracellular balance of NAD and NADP, and is a key enzyme in the biosynthesis of NADP. Catalyzes specifically the phosphorylation on 2'-hydroxyl of the adenosine moiety of NAD to yield NADP. This chain is NAD kinase, found in Vibrio vulnificus (strain CMCP6).